The primary structure comprises 476 residues: Inosine-5'-monophosphate dehydrogenase (476 aa).

CBS domains are found at residues 93 to 151 (IIRD…VKDI) and 152 to 211 (MTKD…TRDE). Residues Asp-242 and 292–294 (GIG) contribute to the NAD(+) site. The K(+) site is built by Gly-294 and Gly-296. Ser-297 provides a ligand contact to IMP. Position 299 (Cys-299) interacts with K(+). Cys-299 functions as the Thioimidate intermediate in the catalytic mechanism. Residues 334-336 (DGG), 357-358 (GY), and 381-385 (YRGMG) contribute to the IMP site. Arg-398 functions as the Proton acceptor in the catalytic mechanism. Glu-408 contributes to the IMP binding site. Glu-462 is a binding site for K(+).

The protein belongs to the IMPDH/GMPR family. As to quaternary structure, homotetramer. Requires K(+) as cofactor.

The catalysed reaction is IMP + NAD(+) + H2O = XMP + NADH + H(+). Its pathway is purine metabolism; XMP biosynthesis via de novo pathway; XMP from IMP: step 1/1. With respect to regulation, mycophenolic acid (MPA) is a non-competitive inhibitor that prevents formation of the closed enzyme conformation by binding to the same site as the amobile flap. In contrast, mizoribine monophosphate (MZP) is a competitive inhibitor that induces the closed conformation. MPA is a potent inhibitor of mammalian IMPDHs but a poor inhibitor of the bacterial enzymes. MZP is a more potent inhibitor of bacterial IMPDH. In terms of biological role, catalyzes the conversion of inosine 5'-phosphate (IMP) to xanthosine 5'-phosphate (XMP), the first committed and rate-limiting step in the de novo synthesis of guanine nucleotides, and therefore plays an important role in the regulation of cell growth. The chain is Inosine-5'-monophosphate dehydrogenase from Korarchaeum cryptofilum (strain OPF8).